The chain runs to 510 residues: Anaerobic nitric oxide reductase transcription regulator NorR (510 aa).

Residues 188–417 (IIGNSQGMRT…LEHVIKRAAV (230 aa)) enclose the Sigma-54 factor interaction domain. ATP-binding positions include 216-223 (GETGVGKE) and 279-288 (ADGGTLFLDE). The segment at residues 486–505 (WAATARQLELDSGNLHRLAK) is a DNA-binding region (H-T-H motif).

It functions in the pathway nitrogen metabolism; nitric oxide reduction. In terms of biological role, required for the expression of anaerobic nitric oxide (NO) reductase, acts as a transcriptional activator for at least the norVW operon. Activation also requires sigma-54. This is Anaerobic nitric oxide reductase transcription regulator NorR from Vibrio vulnificus (strain CMCP6).